A 37-amino-acid chain; its full sequence is Mu-cyrtautoxin-As1a (37 aa).

4 disulfide bridges follow: cysteine 1–cysteine 15, cysteine 8–cysteine 19, cysteine 14–cysteine 35, and cysteine 26–cysteine 31.

This sequence belongs to the neurotoxin 13 (insecticidal toxin ABC) family. 01 (Aps III) subfamily. As to expression, expressed by the venom gland.

It is found in the secreted. Functionally, the recombinant mu-cyrtautoxin-As1a potently and voltage-independently blocks voltage-gated sodium channels (Nav) of insects. It acts by pluging the outer vestibule of the channel. It acts in combination with a weak (30%) voltage-independent block of insect voltage-gated calcium (Cav) channels (low-voltage and high-voltage channels). Tested on DUM neurons, it inhibits sodium currents with an IC(50) of 540 nM (and a Hill coefficient &gt;1, reflecting an incomplete block at higher concentrations). In vivo, it induces flaccid paralysis in adult Australian sheep blowfly Lucilia cuprina. It is both paralytic and lethal, when injected into lepidopteran larvae. It is a slower acting toxin, being lethal at 24 hours, but not paralytic at 1 hour post-injection. In Apomastus schlingeri (Trap-door spider), this protein is Mu-cyrtautoxin-As1a.